Here is a 465-residue protein sequence, read N- to C-terminus: ATP synthase subunit beta (465 aa).

152 to 159 (GGAGVGKT) contacts ATP.

This sequence belongs to the ATPase alpha/beta chains family. As to quaternary structure, F-type ATPases have 2 components, CF(1) - the catalytic core - and CF(0) - the membrane proton channel. CF(1) has five subunits: alpha(3), beta(3), gamma(1), delta(1), epsilon(1). CF(0) has three main subunits: a(1), b(2) and c(9-12). The alpha and beta chains form an alternating ring which encloses part of the gamma chain. CF(1) is attached to CF(0) by a central stalk formed by the gamma and epsilon chains, while a peripheral stalk is formed by the delta and b chains.

The protein resides in the cell inner membrane. The catalysed reaction is ATP + H2O + 4 H(+)(in) = ADP + phosphate + 5 H(+)(out). Its function is as follows. Produces ATP from ADP in the presence of a proton gradient across the membrane. The catalytic sites are hosted primarily by the beta subunits. In Campylobacter fetus subsp. fetus (strain 82-40), this protein is ATP synthase subunit beta.